A 156-amino-acid polypeptide reads, in one-letter code: SsrA-binding protein (156 aa).

This sequence belongs to the SmpB family.

It localises to the cytoplasm. In terms of biological role, required for rescue of stalled ribosomes mediated by trans-translation. Binds to transfer-messenger RNA (tmRNA), required for stable association of tmRNA with ribosomes. tmRNA and SmpB together mimic tRNA shape, replacing the anticodon stem-loop with SmpB. tmRNA is encoded by the ssrA gene; the 2 termini fold to resemble tRNA(Ala) and it encodes a 'tag peptide', a short internal open reading frame. During trans-translation Ala-aminoacylated tmRNA acts like a tRNA, entering the A-site of stalled ribosomes, displacing the stalled mRNA. The ribosome then switches to translate the ORF on the tmRNA; the nascent peptide is terminated with the 'tag peptide' encoded by the tmRNA and targeted for degradation. The ribosome is freed to recommence translation, which seems to be the essential function of trans-translation. This Clostridium botulinum (strain Alaska E43 / Type E3) protein is SsrA-binding protein.